The sequence spans 272 residues: Formamidopyrimidine-DNA glycosylase (272 aa).

Proline 2 acts as the Schiff-base intermediate with DNA in catalysis. The Proton donor role is filled by glutamate 3. Lysine 58 (proton donor; for beta-elimination activity) is an active-site residue. Residues histidine 94, arginine 112, and arginine 153 each contribute to the DNA site. An FPG-type zinc finger spans residues 238–272; the sequence is FVYDRAGEPCRVCGAPIRQIVQGQRSTYFCPNCQR. Arginine 262 acts as the Proton donor; for delta-elimination activity in catalysis.

It belongs to the FPG family. Monomer. The cofactor is Zn(2+).

The enzyme catalyses Hydrolysis of DNA containing ring-opened 7-methylguanine residues, releasing 2,6-diamino-4-hydroxy-5-(N-methyl)formamidopyrimidine.. The catalysed reaction is 2'-deoxyribonucleotide-(2'-deoxyribose 5'-phosphate)-2'-deoxyribonucleotide-DNA = a 3'-end 2'-deoxyribonucleotide-(2,3-dehydro-2,3-deoxyribose 5'-phosphate)-DNA + a 5'-end 5'-phospho-2'-deoxyribonucleoside-DNA + H(+). Its function is as follows. Involved in base excision repair of DNA damaged by oxidation or by mutagenic agents. Acts as a DNA glycosylase that recognizes and removes damaged bases. Has a preference for oxidized purines, such as 7,8-dihydro-8-oxoguanine (8-oxoG). Has AP (apurinic/apyrimidinic) lyase activity and introduces nicks in the DNA strand. Cleaves the DNA backbone by beta-delta elimination to generate a single-strand break at the site of the removed base with both 3'- and 5'-phosphates. This chain is Formamidopyrimidine-DNA glycosylase, found in Burkholderia mallei (strain NCTC 10229).